The chain runs to 344 residues: Chorismatase (344 aa).

Substrate is bound by residues tyrosine 155, arginine 162, tyrosine 215, and arginine 228. Glutamate 338 functions as the Proton acceptor in the catalytic mechanism.

The protein belongs to the FkbO/Hyg5 family. As to quaternary structure, monomer.

It carries out the reaction chorismate + H2O = (3R,4R)-3,4-dihydroxy-3,4-dihydrobenzoate + pyruvate. Competitively inhibited by 3-(2-carboxyethyl)benzoate. In terms of biological role, involved in the biosynthesis of the macrocyclic amino acid-linked polyketides FK506 and FK520 which are potent immunosuppressants that prevent T-cell proliferation through initial binding to the immunophilin FKBP12. Catalyzes the hydrolysis of chorismate via a 1,4-conjugate elimination of water to yield (4R,5R)-4,5-dihydroxycyclohexa-1,5-dienecarboxylic acid (DCDC). The sequence is that of Chorismatase (fkbO) from Streptomyces hygroscopicus.